Consider the following 946-residue polypeptide: Increased sodium tolerance protein 2 (946 aa).

Residues 1-121 are Cytoplasmic-facing; the sequence is MSQTITSLDP…SNLTNNPKQS (121 aa). Residues 122–142 traverse the membrane as a helical segment; it reads LYFAFLQNYIKWLIPFSFFGL. At 143–153 the chain is on the extracellular side; the sequence is SIRFLSNFTYE. A helical transmembrane segment spans residues 154 to 174; sequence FNSTYSLFAILWTLSFTAFWL. Residues 175–217 lie on the Cytoplasmic side of the membrane; sequence YKYEPFWSDRLSKYSSFSTIEFLQDKQKAQKKASSVIMLKKCC. The helical transmembrane segment at 218-238 threads the bilayer; that stretch reads FIPVALLFGAILLSFQLYCFA. Over 239–253 the chain is Extracellular; it reads LEIFIKQIYNGPMIS. A helical membrane pass occupies residues 254 to 274; the sequence is ILSFLPTILICTFTPVLTVIY. The Cytoplasmic portion of the chain corresponds to 275–302; the sequence is NKYFVEPMTKWENHSSVVNAKKSKEAKN. A helical transmembrane segment spans residues 303-323; the sequence is FVIIFLSSYVPLLITLFLYLP. The Extracellular segment spans residues 324–447; the sequence is MGHLLTAEIR…DANFKKLLLQ (124 aa). Residues 448 to 468 traverse the membrane as a helical segment; sequence FGYLVMFSTIWPLAPFICLIV. Residues 469-505 are Cytoplasmic-facing; it reads NLIVYQVDLRKAVLYSKPEYFPFPIYDKPSSVSNTQK. The chain crosses the membrane as a helical span at residues 506–526; the sequence is LTVGLWNSVLVMFSILGCVIT. The Extracellular segment spans residues 527–563; it reads ATLTYMYQSCNIPGVGAHTSIHTNKAWYLANPINHSW. A helical transmembrane segment spans residues 564–584; that stretch reads INIVLYAVFIEHVSVAIFFLF. The Cytoplasmic segment spans residues 585–946; that stretch reads SSILKSSHDD…GLLHKLKKKL (362 aa). Disordered regions lie at residues 617–638 and 665–718; these read EKIP…RKGS and THAN…TEKR. The segment covering 628–638 has biased composition (basic and acidic residues); that stretch reads NEKELVQRKGS. Ser638 bears the Phosphoserine mark. The segment covering 671-689 has biased composition (low complexity); that stretch reads PSSLSSASSPSLSSSSSSS. The residue at position 701 (Thr701) is a Phosphothreonine. Residues Ser704 and Ser720 each carry the phosphoserine modification. Thr726 is subject to Phosphothreonine. Ser729 carries the phosphoserine modification. Tyr730 carries the phosphotyrosine modification. The residue at position 757 (Ser757) is a Phosphoserine. The disordered stretch occupies residues 759–784; that stretch reads RDAKSSAESSNATNNNTLGTESKLLP. The span at 764–775 shows a compositional bias: low complexity; the sequence is SAESSNATNNNT. Ser793, Ser844, and Ser847 each carry phosphoserine. Residues 846-946 form a disordered region; that stretch reads VSVATEQTKK…GLLHKLKKKL (101 aa). Residue Thr850 is modified to Phosphothreonine. Polar residues predominate over residues 859-868; sequence STKNGPSRSI. Residues 884–893 are compositionally biased toward low complexity; the sequence is TTTTTTTDAT. Positions 895-905 are enriched in basic residues; sequence PHHHHHHHRHR. The segment covering 916–927 has biased composition (low complexity); the sequence is SKTTESSSSSSA. Residues 931–946 show a composition bias toward basic residues; sequence KPKHKKGLLHKLKKKL.

In terms of assembly, interacts with BTN2.

Its subcellular location is the cell membrane. In terms of biological role, may be involved in ion homeostasis together with BTN1 or BTN2. This is Increased sodium tolerance protein 2 (IST2) from Saccharomyces cerevisiae (strain ATCC 204508 / S288c) (Baker's yeast).